A 396-amino-acid chain; its full sequence is Elongation factor Tu 1 (396 aa).

In terms of domain architecture, tr-type G spans 10–206 (KPHVNVGTIG…ALDSYIPLPE (197 aa)). Positions 19–26 (GHVDHGKT) are G1. GTP is bound at residue 19 to 26 (GHVDHGKT). T26 provides a ligand contact to Mg(2+). A G2 region spans residues 60-64 (GITIN). The segment at 81-84 (DCPG) is G3. Residues 81 to 85 (DCPGH) and 136 to 139 (NKCD) contribute to the GTP site. The G4 stretch occupies residues 136–139 (NKCD). Residues 174 to 176 (SAK) form a G5 region.

This sequence belongs to the TRAFAC class translation factor GTPase superfamily. Classic translation factor GTPase family. EF-Tu/EF-1A subfamily. As to quaternary structure, monomer.

It is found in the cytoplasm. The catalysed reaction is GTP + H2O = GDP + phosphate + H(+). In terms of biological role, GTP hydrolase that promotes the GTP-dependent binding of aminoacyl-tRNA to the A-site of ribosomes during protein biosynthesis. The polypeptide is Elongation factor Tu 1 (Albidiferax ferrireducens (strain ATCC BAA-621 / DSM 15236 / T118) (Rhodoferax ferrireducens)).